Reading from the N-terminus, the 614-residue chain is Zinc finger protein ztf-7 (614 aa).

The segment covering 1-10 has biased composition (gly residues); sequence MSTSGSGGGN. Residues 1-160 form a disordered region; that stretch reads MSTSGSGGGN…SRPKKPEKMS (160 aa). Residues 18 to 41 show a composition bias toward polar residues; the sequence is NVASSPNANPKKNADTESSGGSKN. Low complexity predominate over residues 54–69; sequence GSNSRNGSRTNSVSNS. Over residues 74–83 the composition is skewed to basic and acidic residues; the sequence is NRKDWTDRKS. Residues 132–150 are compositionally biased toward acidic residues; that stretch reads DYSDEYELDEPFSDSDDED. 2 consecutive C2H2-type zinc fingers follow at residues 356–380 and 447–470; these read NECI…KRNH and VVCL…KTTH.

It belongs to the ZNF277 family. As to quaternary structure, interacts with rps-2.

Its subcellular location is the cytoplasm. Probable transcription factor. Limits the ability to tolerate cold environment or cold-warm stress. In complex with rps-2, mediates the cold-warm shock response by promoting translocation of components of the RNA exosome from the nucleolus to nucleoplasm. The protein is Zinc finger protein ztf-7 of Caenorhabditis elegans.